The sequence spans 227 residues: MQQQHLMQMNQGMMGGYASPTTVTTDLIQQYLDENKQLILAILDNQNNGKVEECARNQAKLQHNLMYLAAIADSQPPQTAAMSQYPSNLMMQSGARYMPQQSAQMMAPQSLMAARSSMMYAQPALSPLQQQQQQQAAAAHGQLGMGSGGTTSGFSILHGEASMGGGGGGGGAGNSMMNAGVFSDFGRGGGGGGKEGSTSLSVDVRGANSGAQSGDGEYLKGTEEEGS.

The segment covering 124 to 139 (ALSPLQQQQQQQAAAA) has biased composition (low complexity). 2 disordered regions span residues 124-160 (ALSP…LHGE) and 188-227 (GGGG…EEGS). Residues 217–227 (EYLKGTEEEGS) are compositionally biased toward basic and acidic residues.

The protein belongs to the SS18 family. Interacts with GRF4. As to expression, highly expressed in internodes, nodes, developing spikelets and developing anthers. Expressed at low levels in roots and mature glumes.

Its subcellular location is the nucleus. It localises to the cytoplasm. Its function is as follows. Transcription coactivator that plays a role in the regulation of meristematic function in leaves, stems and inflorescences. May regulate leaf size, length of stem internodes, and seed size by promoting cell expansion. Transcription coactivator that plays a role in the regulation of grain size. Component of a network formed by the microRNA396 (miRNA396), the GRFs and their interacting factors (GIFs) acting in the regulation of meristem function, at least partially through the control of cell proliferation. Component of the miRNA396c-GRF4-GIF1 regulatory module that plays an important role in grain size determination. The sequence is that of GRF-interacting factor 1 from Oryza sativa subsp. japonica (Rice).